The chain runs to 423 residues: Large ribosomal subunit protein mL37 (423 aa).

The transit peptide at 1-29 (MALASGPARRALAGSGQLGLGGFGAPRRG) directs the protein to the mitochondrion.

It belongs to the mitochondrion-specific ribosomal protein mL37 family. In terms of assembly, component of the mitochondrial large ribosomal subunit (mt-LSU). Mature mammalian 55S mitochondrial ribosomes consist of a small (28S) and a large (39S) subunit. The 28S small subunit contains a 12S ribosomal RNA (12S mt-rRNA) and 30 different proteins. The 39S large subunit contains a 16S rRNA (16S mt-rRNA), a copy of mitochondrial valine transfer RNA (mt-tRNA(Val)), which plays an integral structural role, and 52 different proteins. mL37 forms a heterodimer with mL65.

The protein localises to the mitochondrion. This chain is Large ribosomal subunit protein mL37 (MRPL37), found in Homo sapiens (Human).